We begin with the raw amino-acid sequence, 187 residues long: UPF0301 protein PBPRA3139 (187 aa).

The protein belongs to the UPF0301 (AlgH) family.

This is UPF0301 protein PBPRA3139 from Photobacterium profundum (strain SS9).